The primary structure comprises 149 residues: Probable microsomal glutathione S-transferase (149 aa).

2 helical membrane-spanning segments follow: residues 7–27 (SIFPDFIVFPSAISTIAIGLW) and 123–143 (LSHISFFALLGGSAFGIGSSL).

It belongs to the MAPEG family.

The protein localises to the membrane. It carries out the reaction RX + glutathione = an S-substituted glutathione + a halide anion + H(+). Its function is as follows. May perform the conjugation of reduced glutathione to electrophiles. This Dictyostelium discoideum (Social amoeba) protein is Probable microsomal glutathione S-transferase (mgst).